The chain runs to 252 residues: Eukaryotic translation initiation factor 3 subunit J (252 aa).

Disordered regions lie at residues 24–107 (VPAG…TPEE) and 209–232 (KQSKAKKKKKGVVPGGGLKATMKD). Over residues 36 to 56 (EDEEDDVKDNWDDEEEEEEVK) the composition is skewed to acidic residues. The segment covering 57-107 (EAEVKQEPKVSEKKKIAEKIKEKEKQQKKKQEELKKRLEAPEEHKELTPEE) has biased composition (basic and acidic residues). The stretch at 65-130 (KVSEKKKIAE…ESDLELAKET (66 aa)) forms a coiled coil.

The protein belongs to the eIF-3 subunit J family. In terms of assembly, component of the eukaryotic translation initiation factor 3 (eIF-3) complex, which is composed of 13 subunits: EIF3A, EIF3B, EIF3C, EIF3D, EIF3E, EIF3F, EIF3G, EIF3H, EIF3I, EIF3J, EIF3K, EIF3L and EIF3M.

It localises to the cytoplasm. Component of the eukaryotic translation initiation factor 3 (eIF-3) complex, which is involved in protein synthesis of a specialized repertoire of mRNAs and, together with other initiation factors, stimulates binding of mRNA and methionyl-tRNAi to the 40S ribosome. The eIF-3 complex specifically targets and initiates translation of a subset of mRNAs involved in cell proliferation. This is Eukaryotic translation initiation factor 3 subunit J from Gallus gallus (Chicken).